Reading from the N-terminus, the 340-residue chain is Glutamine synthetase (340 aa).

One can recognise a GS beta-grasp domain in the interval 3–82 (IKAEYIWIDG…LCEVLHTDLT (80 aa)). The GS catalytic domain maps to 88–340 (TRALLRPVAE…CTELARREQI (253 aa)). Residues Glu-109, Glu-111, Glu-171, and Glu-178 each contribute to the Mg(2+) site. Glu-276 contacts L-glutamate.

Belongs to the glutamine synthetase family. As to quaternary structure, homooctamer and homotetramer. Requires Mg(2+) as cofactor.

The protein localises to the cytoplasm. It carries out the reaction L-glutamate + NH4(+) + ATP = L-glutamine + ADP + phosphate + H(+). Catalyzes the ATP-dependent biosynthesis of glutamine from glutamate and ammonia. The polypeptide is Glutamine synthetase (Streptomyces hygroscopicus).